Reading from the N-terminus, the 309-residue chain is HTH-type transcriptional activator AaeR (309 aa).

Residues 1 to 59 (MERLKRMSVFAKVVEFGSFTAAARQLQMSVSSISQTVSKLEDELQVKLLNRSTRSIGLT) enclose the HTH lysR-type domain. Positions 19–38 (FTAAARQLQMSVSSISQTVS) form a DNA-binding region, H-T-H motif.

This sequence belongs to the LysR transcriptional regulatory family.

Activity is regulated by p-hydroxybenzoic acid. Its function is as follows. Transcriptional regulator that activates expression of the aaeXAB operon, which is involved in the efflux of aromatic carboxylic acids such as p-hydroxybenzoic acid (pHBA). In the presence of the effector pHBA, acts by binding to a single target within the aaeXAB-aaeR intergenic region. In the absence of pHBA, binds more than 50 sites along the E.coli K12 genome, including genes related to biofilm formation and several genes involved in stress response, suggesting that it might play a role in quorum sensing in the absence of pHBA. The polypeptide is HTH-type transcriptional activator AaeR (Escherichia coli (strain K12)).